A 370-amino-acid chain; its full sequence is Mitogen-activated protein kinase 3 (370 aa).

Residues 32 to 319 (YVPIKPIGRG…VTEALEHPYM (288 aa)) enclose the Protein kinase domain. ATP is bound by residues 38 to 46 (IGRGAYGIV) and Lys61. Asp158 functions as the Proton acceptor in the catalytic mechanism. Thr191 carries the post-translational modification Phosphothreonine. Positions 191 to 193 (TEY) match the TXY motif. Tyr193 is modified (phosphotyrosine).

Belongs to the protein kinase superfamily. CMGC Ser/Thr protein kinase family. MAP kinase subfamily. Post-translationally, dually phosphorylated on Thr-191 and Tyr-193, which activates the enzyme.

It carries out the reaction L-seryl-[protein] + ATP = O-phospho-L-seryl-[protein] + ADP + H(+). The catalysed reaction is L-threonyl-[protein] + ATP = O-phospho-L-threonyl-[protein] + ADP + H(+). With respect to regulation, activated by threonine and tyrosine phosphorylation. The sequence is that of Mitogen-activated protein kinase 3 (MPK3) from Oryza sativa subsp. japonica (Rice).